We begin with the raw amino-acid sequence, 278 residues long: Elongation factor Ts (278 aa).

The involved in Mg(2+) ion dislocation from EF-Tu stretch occupies residues 80–83 (TDFV).

It belongs to the EF-Ts family.

Its subcellular location is the cytoplasm. Its function is as follows. Associates with the EF-Tu.GDP complex and induces the exchange of GDP to GTP. It remains bound to the aminoacyl-tRNA.EF-Tu.GTP complex up to the GTP hydrolysis stage on the ribosome. The polypeptide is Elongation factor Ts (Micrococcus luteus (strain ATCC 4698 / DSM 20030 / JCM 1464 / CCM 169 / CCUG 5858 / IAM 1056 / NBRC 3333 / NCIMB 9278 / NCTC 2665 / VKM Ac-2230) (Micrococcus lysodeikticus)).